Here is a 556-residue protein sequence, read N- to C-terminus: Aplysianin-A (556 aa).

Positions 1 to 19 are cleaved as a signal peptide; sequence MAVRFLALGLLIFVTSCSG. Residues asparagine 150, asparagine 177, asparagine 374, asparagine 399, asparagine 414, and asparagine 430 are each glycosylated (N-linked (GlcNAc...) asparagine).

It to A.fulica achacin protein. As to quaternary structure, homotetramer. Albumen gland.

Functionally, has antibacterial activity against Gram-negative and Gram-positive bacteria. This Aplysia kurodai (Kuroda's sea hare) protein is Aplysianin-A.